We begin with the raw amino-acid sequence, 500 residues long: Probable malate:quinone oxidoreductase (500 aa).

This sequence belongs to the MQO family. Requires FAD as cofactor.

It carries out the reaction (S)-malate + a quinone = a quinol + oxaloacetate. The protein operates within carbohydrate metabolism; tricarboxylic acid cycle; oxaloacetate from (S)-malate (quinone route): step 1/1. In Bordetella avium (strain 197N), this protein is Probable malate:quinone oxidoreductase.